A 355-amino-acid polypeptide reads, in one-letter code: Probable zinc transporter 12 (355 aa).

A signal peptide spans Met-1 to Ala-25. The Extracellular portion of the chain corresponds to Ala-26 to Lys-50. A helical membrane pass occupies residues Ile-51 to Gly-71. Over Leu-72–Asn-77 the chain is Cytoplasmic. A helical membrane pass occupies residues Phe-78–Ile-98. Residues Leu-99–Pro-116 are Extracellular-facing. Residues Trp-117–Ile-137 traverse the membrane as a helical segment. Residues Glu-138 to Lys-200 lie on the Cytoplasmic side of the membrane. A disordered region spans residues Thr-156–His-183. The helical transmembrane segment at Ile-201–Leu-221 threads the bilayer. The Extracellular portion of the chain corresponds to Gly-222–Lys-231. The chain crosses the membrane as a helical span at residues Pro-232 to Ile-252. The Cytoplasmic segment spans residues Ser-253–Lys-261. The chain crosses the membrane as a helical span at residues Ile-262 to Gly-282. The Extracellular portion of the chain corresponds to Val-283–Asn-302. A helical transmembrane segment spans residues Ala-303–Met-323. The Cytoplasmic portion of the chain corresponds to Asn-324–Gln-334. Residues Val-335–Ala-355 form a helical membrane-spanning segment.

The protein belongs to the ZIP transporter (TC 2.A.5) family.

The protein localises to the cell membrane. Zinc transporter involved in zinc uptake in roots. Targeted by BZIP23 transcription factor in response to zinc-deficient conditions. This chain is Probable zinc transporter 12 (ZIP12), found in Arabidopsis thaliana (Mouse-ear cress).